The chain runs to 505 residues: Nostrin (505 aa).

In terms of domain architecture, F-BAR spans 1 to 260 (MRDPLTDCSY…AISKIDIEKD (260 aa)). Coiled coils occupy residues 101 to 128 (AHQV…LVIS), 160 to 222 (ITTE…RIQL), and 295 to 332 (KERQ…AYSS). Ser-114 carries the post-translational modification Phosphoserine. The region spanning 292–372 (AMSKERQTSS…SYKLSSVLAE (81 aa)) is the REM-1 domain. The 60-residue stretch at 437–496 (LGNGLCKALYPFQARQDDELDLEKGDIVTIHKKKDEGWWFGSLKGKKGHFPAAYVEELPL) folds into the SH3 domain. Position 478 is a phosphoserine (Ser-478).

As to quaternary structure, homotrimer. Interacts with DAB2. Interacts with NOS3, DNM2, WASL and CAV1. Interacts (via SH3 domain) with DNM2; this interaction allows the recruitment of NOS3 to dynamin-positive structures. In terms of tissue distribution, present in pulmonary arterial endothelial cells (at protein level).

Its subcellular location is the cell membrane. The protein resides in the cytoplasmic vesicle. The protein localises to the cytoplasm. It is found in the cytoskeleton. Its function is as follows. Multivalent adapter protein which may decrease NOS3 activity by inducing its translocation away from the plasma membrane. This is Nostrin from Bos taurus (Bovine).